Here is a 228-residue protein sequence, read N- to C-terminus: Ribosomal RNA large subunit methyltransferase E (228 aa).

5 residues coordinate S-adenosyl-L-methionine: glycine 76, tryptophan 78, aspartate 99, aspartate 115, and aspartate 139. Lysine 179 serves as the catalytic Proton acceptor.

The protein belongs to the class I-like SAM-binding methyltransferase superfamily. RNA methyltransferase RlmE family.

The protein localises to the cytoplasm. The catalysed reaction is uridine(2552) in 23S rRNA + S-adenosyl-L-methionine = 2'-O-methyluridine(2552) in 23S rRNA + S-adenosyl-L-homocysteine + H(+). Functionally, specifically methylates the uridine in position 2552 of 23S rRNA at the 2'-O position of the ribose in the fully assembled 50S ribosomal subunit. This chain is Ribosomal RNA large subunit methyltransferase E, found in Bradyrhizobium diazoefficiens (strain JCM 10833 / BCRC 13528 / IAM 13628 / NBRC 14792 / USDA 110).